Reading from the N-terminus, the 401-residue chain is All trans-polyprenyl-diphosphate synthase PDSS2 (401 aa).

The protein belongs to the FPP/GGPP synthase family. As to quaternary structure, heterotetramer composed of 2 PDSS1/DPS1 and 2 PDSS2/DLP1 subunits.

The protein resides in the mitochondrion. It carries out the reaction 7 isopentenyl diphosphate + (2E,6E)-farnesyl diphosphate = all-trans-decaprenyl diphosphate + 7 diphosphate. The catalysed reaction is 6 isopentenyl diphosphate + (2E,6E)-farnesyl diphosphate = all-trans-nonaprenyl diphosphate + 6 diphosphate. Its pathway is cofactor biosynthesis; ubiquinone biosynthesis. Functionally, heterotetrameric enzyme that catalyzes the condensation of farnesyl diphosphate (FPP), which acts as a primer, and isopentenyl diphosphate (IPP) to produce prenyl diphosphates of varying chain lengths and participates in the determination of the side chain of ubiquinone. Supplies nona and decaprenyl diphosphate, the precursors for the side chain of the isoprenoid quinones ubiquinone-9 (Q9) and ubiquinone-10 (Q10) respectively. The enzyme adds isopentenyl diphosphate molecules sequentially to farnesyl diphosphate with trans stereochemistry. May play a role during cerebellar development. May regulate mitochondrial respiratory chain function. This Rattus norvegicus (Rat) protein is All trans-polyprenyl-diphosphate synthase PDSS2.